Reading from the N-terminus, the 381-residue chain is Pentatricopeptide repeat-containing protein 2, mitochondrial (381 aa).

A PPR repeat occupies 159–193 (TSFNILMDMLFTKGKYERALQVLIEMKNQDVRFSK). At Ser375 the chain carries Phosphoserine.

Belongs to the PTCD2 family. High expression in heart and liver and low expression in kidney, brain and testis.

It is found in the mitochondrion. Involved in mitochondrial RNA maturation and mitochondrial respiratory chain function. This chain is Pentatricopeptide repeat-containing protein 2, mitochondrial (Ptcd2), found in Mus musculus (Mouse).